We begin with the raw amino-acid sequence, 169 residues long: Disulfide bond formation protein B (169 aa).

The Cytoplasmic segment spans residues 1-13 (MQSLISFAHSRLS). A helical transmembrane segment spans residues 14-30 (WGILALSALALESAALY). Residues 31–48 (FQHIMKLDPCVMCIYQRV) are Periplasmic-facing. A disulfide bridge links Cys-40 with Cys-43. A helical membrane pass occupies residues 49–64 (AVFGLLGAGLFGFMAP). Residues 65-71 (ANRVIRA) are Cytoplasmic-facing. Residues 72–89 (LGALLWGISAAWGLKLAL) traverse the membrane as a helical segment. Residues 90–144 (ELVDMQNNPNPFSTCSFLPEFPSWLQLHEWLPSVFMPTGMCTDIPWEFAGVTMGE) lie on the Periplasmic side of the membrane. Cys-104 and Cys-130 are oxidised to a cystine. A helical membrane pass occupies residues 145-163 (WMIVAFSVYLLAWLAFIVP). Topologically, residues 164-169 (MLKKSA) are cytoplasmic.

Belongs to the DsbB family.

The protein resides in the cell inner membrane. Required for disulfide bond formation in some periplasmic proteins. Acts by oxidizing the DsbA protein. The polypeptide is Disulfide bond formation protein B (Shewanella amazonensis (strain ATCC BAA-1098 / SB2B)).